A 114-amino-acid polypeptide reads, in one-letter code: UPF0342 protein LCABL_19440 (114 aa).

This sequence belongs to the UPF0342 family.

The sequence is that of UPF0342 protein LCABL_19440 from Lacticaseibacillus casei (strain BL23) (Lactobacillus casei).